Reading from the N-terminus, the 85-residue chain is MGLKLHINWFDKRTEEFKGGEYSKDFGDDGSVIERLGMPFKDNINNGWFDVIAEWVPLLQPYFNHQIDISDNEYFVSFDYRDGDW.

The protein belongs to the cloacin immunity protein family.

This protein inhibits the 16S RNA hydrolyzing activity of colicin E6 by binding with high affinity to the C-terminal catalytic domain of E6. This protein is able to protect a cell, which harbors the plasmid ColE6 against colicin E6. The chain is Colicin-E6 immunity protein (imm) from Escherichia coli.